Reading from the N-terminus, the 417-residue chain is MAEIRNYTMNFGPQHPAAHGVLRLVLELDGEVIQRADPHIGLLHRATEKLAEYKTYIQSVPYMDRLDYVSMMANEHAYVMAIEKLLQLEVPIRAQYIRVMFDEITRILNHLLWLGAHALDVGAMTVFLYAFRDREDLMDAYESVSGARMHAAYYRPGGVYRDLPDSMPQYKASKIHDEKTTKARNENRQGSLLDFIEDFTNRFPTYVDEYETLLTDNRIWKQRLVGIGTVSPERAMALGFTGPMLRGSGVEWDLRKKQPYEVYDQLDFDIPVGVNGDCYDRYLVRIEEFRQSNRIIRQCVDWLRKNPGPVITDNHKVAPPSRVNMKQNMEELIHHFKLFTEGFHVPPGETYAAVEHPKGEFGIYLISDGANMPYRMKIRAPGFAHLAALDEMSRGHMIADVVAIIGTQDIVFGEIDR.

Belongs to the complex I 49 kDa subunit family. As to quaternary structure, NDH-1 is composed of 14 different subunits. Subunits NuoB, C, D, E, F, and G constitute the peripheral sector of the complex.

The protein localises to the cell inner membrane. The catalysed reaction is a quinone + NADH + 5 H(+)(in) = a quinol + NAD(+) + 4 H(+)(out). Functionally, NDH-1 shuttles electrons from NADH, via FMN and iron-sulfur (Fe-S) centers, to quinones in the respiratory chain. The immediate electron acceptor for the enzyme in this species is believed to be ubiquinone. Couples the redox reaction to proton translocation (for every two electrons transferred, four hydrogen ions are translocated across the cytoplasmic membrane), and thus conserves the redox energy in a proton gradient. This Nitrosospira multiformis (strain ATCC 25196 / NCIMB 11849 / C 71) protein is NADH-quinone oxidoreductase subunit D.